A 336-amino-acid polypeptide reads, in one-letter code: Sodium/bile acid cotransporter 7 (336 aa).

Residues 1–10 (MGLIARVRKE) are Cytoplasmic-facing. A helical transmembrane segment spans residues 11–31 (WFIIGIVLVITFAKLQPSVGV). Residues 32–37 (KGGPLH) lie on the Extracellular side of the membrane. A helical membrane pass occupies residues 38–58 (PEITITYVAVSVIFFNSGLSL). Residues 59 to 71 (KTEELASALMHVK) lie on the Cytoplasmic side of the membrane. Residues 72–92 (LHFFVQTFTLVFFPIAIWLLL) traverse the membrane as a helical segment. Topologically, residues 93-116 (KVLALTAINEWLLRGLQTVACMPP) are extracellular. Residues 117–137 (PVSSAVILTKAVGGNEAAAIF) form a helical membrane-spanning segment. Asparagine 138 is a topological domain (cytoplasmic). Residues 139–159 (SAFGSFLGIVVTPLLLLVFLG) traverse the membrane as a helical segment. The Extracellular portion of the chain corresponds to 160–163 (SSSS). The chain crosses the membrane as a helical span at residues 164–184 (VPFTSIFSQLFMTVVVPLIVG). Residues 185–201 (QVCRRFLRECLDRRKPP) lie on the Cytoplasmic side of the membrane. A helical membrane pass occupies residues 202–222 (FGAVSSVVLLMIIYSTFCDTF). The Extracellular portion of the chain corresponds to 223–233 (NNPNIELDHLS). The helical transmembrane segment at 234–254 (LLTVVFIIFSIQLSFMALIFF) threads the bilayer. Over 255 to 270 (LSTRKSSGFSAADSVA) the chain is Cytoplasmic. The helical transmembrane segment at 271-291 (IMFCATHKSLTLGIPMLKIVF) threads the bilayer. At 292 to 298 (EGYEHLS) the chain is on the extracellular side. The helical transmembrane segment at 299-319 (LISVPLLIYHPAQILLGSVLL) threads the bilayer. The Cytoplasmic segment spans residues 320-336 (PSIKTWMSGRQKTLTPI).

This sequence belongs to the bile acid:sodium symporter (BASS) (TC 2.A.28) family.

It localises to the cell membrane. Its subcellular location is the endoplasmic reticulum membrane. The protein resides in the golgi apparatus membrane. Functionally, involved in teeth and skeletal development. Has an essential role in the biosynthesis and trafficking of glycosaminoglycans and glycoproteins to produce a proper functioning extracellular matrix. Required for extracellular matrix mineralization. Also involved in the regulation of cellular calcium homeostasis. Does not show transport activity towards bile acids or steroid sulfates. This chain is Sodium/bile acid cotransporter 7 (slc10a7), found in Danio rerio (Zebrafish).